A 217-amino-acid polypeptide reads, in one-letter code: Adenylate kinase (217 aa).

Position 10–15 (10–15) interacts with ATP; sequence GIGKGT. The tract at residues 30 to 59 is NMP; it reads ATGDIFRKNFQENTPLGKESKKFINKGLLV. AMP-binding positions include threonine 31, arginine 36, 57-59, 85-88, and glutamine 92; these read LLV and GFPR. Residues 126 to 163 form an LID region; that stretch reads GRRICSHCGKVYHLDNLPPKIEGICDKDQKKLIQREDD. Residue arginine 127 coordinates ATP. Residues cysteine 130 and cysteine 133 each coordinate Zn(2+). 136 to 137 provides a ligand contact to ATP; it reads VY. Zn(2+) contacts are provided by cysteine 150 and aspartate 153. AMP contacts are provided by arginine 160 and arginine 171. Glutamine 199 lines the ATP pocket.

It belongs to the adenylate kinase family. As to quaternary structure, monomer.

It localises to the cytoplasm. The enzyme catalyses AMP + ATP = 2 ADP. Its pathway is purine metabolism; AMP biosynthesis via salvage pathway; AMP from ADP: step 1/1. In terms of biological role, catalyzes the reversible transfer of the terminal phosphate group between ATP and AMP. Plays an important role in cellular energy homeostasis and in adenine nucleotide metabolism. The chain is Adenylate kinase from Phytoplasma australiense.